Here is a 478-residue protein sequence, read N- to C-terminus: uncharacterized protein (478 aa).

Positions 174 to 366 constitute an ATP-grasp domain; sequence RQVLAAAGVP…LIGEHIKLAI (193 aa). 214-219 lines the ATP pocket; it reads GSGSRG. Arg-339 is a catalytic residue.

This is an uncharacterized protein from Sinorhizobium fredii (strain NBRC 101917 / NGR234).